We begin with the raw amino-acid sequence, 105 residues long: UPF0145 protein HD_1349 (105 aa).

The protein belongs to the UPF0145 family.

In Haemophilus ducreyi (strain 35000HP / ATCC 700724), this protein is UPF0145 protein HD_1349.